The primary structure comprises 261 residues: Ribonuclease HII (261 aa).

Positions 71 to 259 (QYIAGVDEVG…VKEAKLHFES (189 aa)) constitute an RNase H type-2 domain. Residues aspartate 77, glutamate 78, and aspartate 169 each contribute to the a divalent metal cation site.

The protein belongs to the RNase HII family. The cofactor is Mn(2+). Mg(2+) is required as a cofactor.

Its subcellular location is the cytoplasm. It catalyses the reaction Endonucleolytic cleavage to 5'-phosphomonoester.. In terms of biological role, endonuclease that specifically degrades the RNA of RNA-DNA hybrids. In Listeria innocua serovar 6a (strain ATCC BAA-680 / CLIP 11262), this protein is Ribonuclease HII.